The primary structure comprises 900 residues: Bifunctional uridylyltransferase/uridylyl-removing enzyme (900 aa).

A uridylyltransferase region spans residues 1 to 342; that stretch reads MPQVDPELFD…WEGESGPIVP (342 aa). A uridylyl-removing region spans residues 343-705; that stretch reads LNSRFQVRDG…TTQREFEGGT (363 aa). An HD domain is found at 461–583; that stretch reads VDAHTLNVIK…VGDETHLDYL (123 aa). ACT domains are found at residues 706 to 789 and 816 to 896; these read QIFI…IIQR and ILEI…PSPS.

This sequence belongs to the GlnD family. Mg(2+) serves as cofactor.

It carries out the reaction [protein-PII]-L-tyrosine + UTP = [protein-PII]-uridylyl-L-tyrosine + diphosphate. The enzyme catalyses [protein-PII]-uridylyl-L-tyrosine + H2O = [protein-PII]-L-tyrosine + UMP + H(+). Its activity is regulated as follows. Uridylyltransferase (UTase) activity is inhibited by glutamine, while glutamine activates uridylyl-removing (UR) activity. Modifies, by uridylylation and deuridylylation, the PII regulatory proteins (GlnB and homologs), in response to the nitrogen status of the cell that GlnD senses through the glutamine level. Under low glutamine levels, catalyzes the conversion of the PII proteins and UTP to PII-UMP and PPi, while under higher glutamine levels, GlnD hydrolyzes PII-UMP to PII and UMP (deuridylylation). Thus, controls uridylylation state and activity of the PII proteins, and plays an important role in the regulation of nitrogen fixation and metabolism. The chain is Bifunctional uridylyltransferase/uridylyl-removing enzyme from Stutzerimonas stutzeri (strain A1501) (Pseudomonas stutzeri).